Reading from the N-terminus, the 172-residue chain is MLFMMAAIALAVLLFMYVAVALRDHHPFLNRVQALLRDFDNTLLYGTHVRIYDLSTPARTERLFIIAPENVVLYNFDKTLYYYLDSANVFCPNEYTVAKFTGATIRTVNDTGVYSTACTVVGSLTLIEHFVGLKNNSPDHTLVLDVAEQIQFTIMDVINYLIYNGYVDIAAG.

This sequence belongs to the baculoviridae 19 kDa protein family.

This is an uncharacterized protein from Orgyia pseudotsugata multicapsid polyhedrosis virus (OpMNPV).